Reading from the N-terminus, the 264-residue chain is 3-methyl-2-oxobutanoate hydroxymethyltransferase (264 aa).

D45 and D84 together coordinate Mg(2+). Residues 45–46, D84, and K112 contribute to the 3-methyl-2-oxobutanoate site; that span reads DS. E114 is a Mg(2+) binding site. E181 serves as the catalytic Proton acceptor.

This sequence belongs to the PanB family. In terms of assembly, homodecamer; pentamer of dimers. The cofactor is Mg(2+).

The protein resides in the cytoplasm. It catalyses the reaction 3-methyl-2-oxobutanoate + (6R)-5,10-methylene-5,6,7,8-tetrahydrofolate + H2O = 2-dehydropantoate + (6S)-5,6,7,8-tetrahydrofolate. The protein operates within cofactor biosynthesis; (R)-pantothenate biosynthesis; (R)-pantoate from 3-methyl-2-oxobutanoate: step 1/2. Catalyzes the reversible reaction in which hydroxymethyl group from 5,10-methylenetetrahydrofolate is transferred onto alpha-ketoisovalerate to form ketopantoate. This chain is 3-methyl-2-oxobutanoate hydroxymethyltransferase, found in Vibrio atlanticus (strain LGP32) (Vibrio splendidus (strain Mel32)).